The sequence spans 452 residues: Asparagine--tRNA ligase (452 aa).

It belongs to the class-II aminoacyl-tRNA synthetase family. Homodimer.

It localises to the cytoplasm. It catalyses the reaction tRNA(Asn) + L-asparagine + ATP = L-asparaginyl-tRNA(Asn) + AMP + diphosphate + H(+). The chain is Asparagine--tRNA ligase from Mycoplasma mycoides subsp. mycoides SC (strain CCUG 32753 / NCTC 10114 / PG1).